The primary structure comprises 336 residues: Phosphate acyltransferase (336 aa).

Belongs to the PlsX family. In terms of assembly, homodimer. Probably interacts with PlsY.

Its subcellular location is the cytoplasm. It catalyses the reaction a fatty acyl-[ACP] + phosphate = an acyl phosphate + holo-[ACP]. The protein operates within lipid metabolism; phospholipid metabolism. Its function is as follows. Catalyzes the reversible formation of acyl-phosphate (acyl-PO(4)) from acyl-[acyl-carrier-protein] (acyl-ACP). This enzyme utilizes acyl-ACP as fatty acyl donor, but not acyl-CoA. This Pseudomonas fluorescens (strain Pf0-1) protein is Phosphate acyltransferase.